Here is a 195-residue protein sequence, read N- to C-terminus: Small ribosomal subunit protein uS4B (195 aa).

One can recognise an S4 RNA-binding domain in the interval 107–181 (RRLQTQVYKL…VARRNAARKA (75 aa)). The tract at residues 161 to 195 (TSPFGGARPGRVARRNAARKAEASGEAAEEAEDEE) is disordered. Lysine 180 participates in a covalent cross-link: Glycyl lysine isopeptide (Lys-Gly) (interchain with G-Cter in ubiquitin). Residue serine 184 is modified to Phosphoserine.

This sequence belongs to the universal ribosomal protein uS4 family. Component of the small ribosomal subunit (SSU). Mature yeast ribosomes consist of a small (40S) and a large (60S) subunit. The 40S small subunit contains 1 molecule of ribosomal RNA (18S rRNA) and 33 different proteins (encoded by 57 genes). The large 60S subunit contains 3 rRNA molecules (25S, 5.8S and 5S rRNA) and 46 different proteins (encoded by 81 genes). Interacts with snoRNA U3. uS11 interacts with MPP10. Component of the ribosomal small subunit (SSU) processome composed of at least 40 protein subunits and snoRNA U3.

It localises to the cytoplasm. Its subcellular location is the nucleus. The protein localises to the nucleolus. Its function is as follows. Component of the ribosome, a large ribonucleoprotein complex responsible for the synthesis of proteins in the cell. The small ribosomal subunit (SSU) binds messenger RNAs (mRNAs) and translates the encoded message by selecting cognate aminoacyl-transfer RNA (tRNA) molecules. The large subunit (LSU) contains the ribosomal catalytic site termed the peptidyl transferase center (PTC), which catalyzes the formation of peptide bonds, thereby polymerizing the amino acids delivered by tRNAs into a polypeptide chain. The nascent polypeptides leave the ribosome through a tunnel in the LSU and interact with protein factors that function in enzymatic processing, targeting, and the membrane insertion of nascent chains at the exit of the ribosomal tunnel. uS4 is involved in nucleolar processing of pre-18S ribosomal RNA and ribosome assembly. The sequence is that of Small ribosomal subunit protein uS4B from Saccharomyces cerevisiae (strain ATCC 204508 / S288c) (Baker's yeast).